A 65-amino-acid chain; its full sequence is MPKIKTVRGAAKRFKKTASGGFKRKQSHLRHILTKKTTKRKRHLRHKSMVAKADQVLVVACLPYV.

Residues 1-26 (MPKIKTVRGAAKRFKKTASGGFKRKQ) are disordered. Residues 10–26 (AAKRFKKTASGGFKRKQ) show a composition bias toward basic residues.

It belongs to the bacterial ribosomal protein bL35 family.

The chain is Large ribosomal subunit protein bL35 from Mannheimia succiniciproducens (strain KCTC 0769BP / MBEL55E).